Consider the following 550-residue polypeptide: Sterol O-acyltransferase 1 (550 aa).

N-acetylmethionine is present on methionine 1. The interval 1–36 (MVGEEKMSLRNRLSKSRENPEEDEDQRKPAKESLEA) is disordered. At 1-138 (MVGEEKMSLR…LDELLEVDHI (138 aa)) the chain is on the cytoplasmic side. A Phosphoserine modification is found at serine 8. Residues 15 to 34 (KSRENPEEDEDQRKPAKESL) show a composition bias toward basic and acidic residues. Histidine 137 contributes to the cholesterol binding site. Residues 139–160 (RTIYHMFIALLILFILSTLVVD) traverse the membrane as a helical segment. At 161 to 180 (YIDEGRLVLEFSLLSYAFGK) the chain is on the lumenal side. The chain crosses the membrane as a helical span at residues 181–206 (FPTVVWTWWIMFLSTFSVPYFLFQRW). Residues 207–218 (ATGYSKSSHPLI) lie on the Cytoplasmic side of the membrane. The chain crosses the membrane as a helical span at residues 219–244 (NSLFHGFLFMVFQIGILGFGPTYVVL). Topologically, residues 245-252 (AYTLPPAS) are lumenal. Residues 253–276 (RFIIIFEQIRFVMKAHSFVRENVP) traverse the membrane as a helical segment. At 277-319 (RVLNSAKEKSSTVPIPTVNQYLYFLFAPTLIYRDSYPRNPTVR) the chain is on the cytoplasmic side. Residues 320-352 (WGYVAMQFAQVFGCFFYVYYIFERLCAPLFRNI) traverse the membrane as a helical segment. Topologically, residues 353–369 (KQEPFSARVLVLCVFNS) are lumenal. The chain crosses the membrane as a helical span at residues 370-395 (ILPGVLILFLTFFAFLHCWLNAFAEM). Over 396-443 (LRFGDRMFYKDWWNSTSYSNYYRTWNVVVHDWLYYYAYKDFLWFFSKR) the chain is Cytoplasmic. An FYXDWWN motif motif is present at residues 403–409 (FYKDWWN). An acyl-CoA-binding residues include asparagine 415, arginine 418, asparagine 421, histidine 425, tyrosine 433, lysine 445, and serine 456. The chain crosses the membrane as a helical span at residues 444–468 (FKSAAMLAVFAVSAVVHEYALAVCL). Residue histidine 460 is part of the active site. At 469–474 (SFFYPV) the chain is on the lumenal side. A helical membrane pass occupies residues 475–490 (LFVLFMFFGMAFNFIV). Over 491–496 (NDSRKK) the chain is Cytoplasmic. The chain crosses the membrane as a helical span at residues 497 to 528 (PIWNVMMWTSLFLGNGVLLCFYSQEWYARQHC). Cysteine 528 and cysteine 546 form a disulfide bridge. Residues 529-550 (PLKNPTFLDYVRPRSWTCRYVF) lie on the Lumenal side of the membrane.

This sequence belongs to the membrane-bound acyltransferase family. Sterol o-acyltransferase subfamily. May form homo- or heterodimers. Interacts with UBIAD1. In terms of tissue distribution, expressed in most tissues, but most strongly in the adrenal gland. Expressed more strongly in liver Kupffer cells than in hepatocytes.

It is found in the endoplasmic reticulum membrane. The enzyme catalyses a sterol + a long-chain fatty acyl-CoA = a long-chain 3-hydroxysterol ester + CoA. It catalyses the reaction cholesterol + an acyl-CoA = a cholesterol ester + CoA. The catalysed reaction is cholesterol + (9Z)-octadecenoyl-CoA = cholesteryl (9Z-octadecenoate) + CoA. It carries out the reaction cholesterol + hexadecanoyl-CoA = cholesteryl hexadecanoate + CoA. The enzyme catalyses octadecanoyl-CoA + cholesterol = cholesteryl octadecanoate + CoA. It catalyses the reaction (9Z,12Z)-octadecadienoyl-CoA + cholesterol = cholesteryl (9Z,12Z)-octadecadienoate + CoA. The catalysed reaction is (5Z,8Z,11Z,14Z)-eicosatetraenoyl-CoA + cholesterol = cholesteryl (5Z,8Z,11Z,14Z)-eicosatetraenoate + CoA. It carries out the reaction (9Z)-hexadecenoyl-CoA + cholesterol = cholesteryl (9Z)-hexadecenoate + CoA. The enzyme catalyses (11Z)-octadecenoyl-CoA + cholesterol = cholesteryl (11Z)-octadecenoate + CoA. It catalyses the reaction (7Z)-octadecenoyl-CoA + cholesterol = cholesteryl (7Z)-octadecenoate + CoA. Catalyzes the formation of fatty acid-cholesterol esters, which are less soluble in membranes than cholesterol. Plays a role in lipoprotein assembly and dietary cholesterol absorption. Preferentially utilizes oleoyl-CoA ((9Z)-octadecenoyl-CoA) as a substrate: shows a higher activity towards an acyl-CoA substrate with a double bond at the delta-9 position (9Z) than towards saturated acyl-CoA or an unsaturated acyl-CoA with a double bond at the delta-7 (7Z) or delta-11 (11Z) positions. The chain is Sterol O-acyltransferase 1 (SOAT1) from Chlorocebus aethiops (Green monkey).